The following is a 435-amino-acid chain: Diaminobutyrate--2-oxoglutarate transaminase (435 aa).

N6-(pyridoxal phosphate)lysine is present on Lys-266.

It belongs to the class-III pyridoxal-phosphate-dependent aminotransferase family. Pyridoxal 5'-phosphate is required as a cofactor.

It carries out the reaction L-2,4-diaminobutanoate + 2-oxoglutarate = L-aspartate 4-semialdehyde + L-glutamate. It functions in the pathway amine and polyamine biosynthesis; ectoine biosynthesis; L-ectoine from L-aspartate 4-semialdehyde: step 1/3. Functionally, catalyzes reversively the conversion of L-aspartate beta-semialdehyde (ASA) to L-2,4-diaminobutyrate (DABA) by transamination with L-glutamate. This chain is Diaminobutyrate--2-oxoglutarate transaminase (ectB), found in Bordetella bronchiseptica (strain ATCC BAA-588 / NCTC 13252 / RB50) (Alcaligenes bronchisepticus).